The primary structure comprises 184 residues: uncharacterized protein (184 aa).

The signal sequence occupies residues 1–20 (MTLRKILALTCLLLPMMASA).

The protein to H.influenzae HI_0045.

The protein localises to the periplasm. This is an uncharacterized protein from Escherichia coli (strain K12).